The following is a 413-amino-acid chain: Tyrosine--tRNA ligase (413 aa).

The 'HIGH' region signature appears at 59-68 (PTAPDIHIGH). A 'KMSKS' region motif is present at residues 243–247 (KMSKS). Lys246 is a binding site for ATP. One can recognise an S4 RNA-binding domain in the interval 351-411 (LAIGQLLKQA…GKRRFARVTL (61 aa)).

Belongs to the class-I aminoacyl-tRNA synthetase family. TyrS type 2 subfamily. In terms of assembly, homodimer.

The protein resides in the cytoplasm. It catalyses the reaction tRNA(Tyr) + L-tyrosine + ATP = L-tyrosyl-tRNA(Tyr) + AMP + diphosphate + H(+). Catalyzes the attachment of tyrosine to tRNA(Tyr) in a two-step reaction: tyrosine is first activated by ATP to form Tyr-AMP and then transferred to the acceptor end of tRNA(Tyr). The polypeptide is Tyrosine--tRNA ligase (Burkholderia lata (strain ATCC 17760 / DSM 23089 / LMG 22485 / NCIMB 9086 / R18194 / 383)).